The sequence spans 239 residues: Norbelladine 4'-O-methyltransferase (239 aa).

S-adenosyl-L-methionine-binding positions include Val55, Glu77, 79–80 (GV), Ser85, Asp103, and Ala132. Asp155 lines the a divalent metal cation pocket. Asp157 provides a ligand contact to S-adenosyl-L-methionine. Residues Asp181 and Asn182 each coordinate a divalent metal cation.

It belongs to the class I-like SAM-binding methyltransferase superfamily. Cation-dependent O-methyltransferase family. It depends on Mg(2+) as a cofactor. As to expression, highly expressed in bulbs. Detected in leaves and inflorescences.

The catalysed reaction is norbelladine + S-adenosyl-L-methionine = 4'-O-methylnorbelladine + S-adenosyl-L-homocysteine + H(+). It functions in the pathway alkaloid biosynthesis. Its function is as follows. 4'-O-methyltransferase converting norbelladine to 4'-O-methylnorbelladine. 4'-O-methylnorbelladine is a precursor to all Amaryllidaceae alkaloids such as galanthamine, lycorine and haemanthamine, and including haemanthamine- and crinamine-type alkaloids, promising anticancer agents. Can use norbelladine, N-methylnorbelladine and dopamine as substrate, but not caffeic acid, vanillin, 3,4-dihydroxybenzaldehyde and tyramine. This is Norbelladine 4'-O-methyltransferase from Narcissus aff. pseudonarcissus MK-2014 (Daffodil).